The primary structure comprises 467 residues: UDP-N-acetylmuramate--L-alanine ligase (467 aa).

114 to 120 (GTHGKTT) provides a ligand contact to ATP.

Belongs to the MurCDEF family.

It is found in the cytoplasm. It carries out the reaction UDP-N-acetyl-alpha-D-muramate + L-alanine + ATP = UDP-N-acetyl-alpha-D-muramoyl-L-alanine + ADP + phosphate + H(+). The protein operates within cell wall biogenesis; peptidoglycan biosynthesis. Functionally, cell wall formation. This Rhodopseudomonas palustris (strain BisB5) protein is UDP-N-acetylmuramate--L-alanine ligase.